A 257-amino-acid chain; its full sequence is Type 2 phosphatidylinositol 4,5-bisphosphate 4-phosphatase (257 aa).

Residues 1-10 show a composition bias toward basic and acidic residues; sequence MAADGVDERS. A disordered region spans residues 1 to 34; the sequence is MAADGVDERSPLLSASHSGSVTPTAPPYLQDSSP. Residues 13 to 23 are compositionally biased toward polar residues; the sequence is LSASHSGSVTP. Thr-22 carries the phosphothreonine modification. Phosphoserine is present on Ser-33. The active site involves Cys-107. The CX5R motif signature appears at 107–113; that stretch reads CKDTSRR. A run of 2 helical transmembrane segments spans residues 192–212 and 227–247; these read CCAYITIGMMCIFIGIGLTVG and WAIAYLLGLVCLIRACYWGAI.

It localises to the late endosome membrane. Its subcellular location is the lysosome membrane. The protein resides in the cytoplasmic vesicle. It is found in the phagosome membrane. The protein localises to the cell membrane. It catalyses the reaction a 1,2-diacyl-sn-glycero-3-phospho-(1D-myo-inositol-4,5-bisphosphate) + H2O = a 1,2-diacyl-sn-glycero-3-phospho-(1D-myo-inositol-5-phosphate) + phosphate. In terms of biological role, catalyzes the hydrolysis of phosphatidylinositol-4,5-bisphosphate (PtdIns-4,5-P2) to phosphatidylinositol-4-phosphate (PtdIns-4-P). Does not hydrolyze phosphatidylinositol 3,4,5-trisphosphate, phosphatidylinositol 3,4-bisphosphate, inositol 3,5-bisphosphate, inositol 3,4-bisphosphate, phosphatidylinositol 5-monophosphate, phosphatidylinositol 4-monophosphate and phosphatidylinositol 3-monophosphate. Negatively regulates the phagocytosis of large particles by reducing phagosomal phosphatidylinositol 4,5-bisphosphate accumulation during cup formation. This Bos taurus (Bovine) protein is Type 2 phosphatidylinositol 4,5-bisphosphate 4-phosphatase.